Here is a 57-residue protein sequence, read N- to C-terminus: uncharacterized protein (57 aa).

This is an uncharacterized protein from Thermoproteus tenax virus 1 (strain KRA1) (TTV1).